The primary structure comprises 294 residues: Putative glucose-6-phosphate 1-epimerase (294 aa).

Arg74 and Arg99 together coordinate substrate. His164 is an active-site residue. A substrate-binding site is contributed by Asp208. The active site involves Glu267.

The protein belongs to the glucose-6-phosphate 1-epimerase family. Monomer in solution.

It carries out the reaction alpha-D-glucose 6-phosphate = beta-D-glucose 6-phosphate. Functionally, probably functions as a hexose-6-phosphate 1-epimerase. This chain is Putative glucose-6-phosphate 1-epimerase, found in Salmonella typhimurium (strain LT2 / SGSC1412 / ATCC 700720).